Here is a 261-residue protein sequence, read N- to C-terminus: Hemin import ATP-binding protein HmuV (261 aa).

An ABC transporter domain is found at 5–241; sequence YTAENLTFTR…DALAHWYGAQ (237 aa). 37 to 44 lines the ATP pocket; sequence GPNGAGKS.

The protein belongs to the ABC transporter superfamily. Heme (hemin) importer (TC 3.A.1.14.5) family. The complex is composed of two ATP-binding proteins (HmuV), two transmembrane proteins (HmuU) and a solute-binding protein (HmuT).

Its subcellular location is the cell inner membrane. Part of the ABC transporter complex HmuTUV involved in hemin import. Responsible for energy coupling to the transport system. In Enterobacter cloacae, this protein is Hemin import ATP-binding protein HmuV.